The chain runs to 231 residues: DNA mismatch repair protein MutH (231 aa).

Belongs to the MutH family.

It localises to the cytoplasm. In terms of biological role, sequence-specific endonuclease that cleaves unmethylated GATC sequences. It is involved in DNA mismatch repair. The sequence is that of DNA mismatch repair protein MutH from Klebsiella pneumoniae subsp. pneumoniae (strain ATCC 700721 / MGH 78578).